Reading from the N-terminus, the 1225-residue chain is Hybrid signal transduction histidine kinase C (1225 aa).

A helical transmembrane segment spans residues 8–28 (GFLLSTLFFTIISIILFYFFI). The span at 313–356 (LSPRSLSSSSSSSPSSSNNNGNTNNSGSLSPRSSNSNGSAVSPR) shows a compositional bias: low complexity. Residues 313 to 407 (LSPRSLSSSS…SNGTISSPRT (95 aa)) form a disordered region. Polar residues predominate over residues 357–368 (NVSSNSMSPRGQ). Low complexity predominate over residues 370–388 (SDRSISSPRGSSSSSSSSS). Positions 389–407 (NELAISPRNSNGTISSPRT) are enriched in polar residues. The Histidine kinase domain maps to 426-653 (HLSHELRTPI…TFHFVIPLET (228 aa)). His429 is modified (phosphohistidine; by autocatalysis). The Response regulatory 1 domain occupies 669-784 (SVLVVDKNPY…HLVACLLASM (116 aa)). Asp721 carries the post-translational modification 4-aspartylphosphate. 3 disordered regions span residues 809–832 (NNIN…SVYG), 941–974 (DDDS…DELN), and 1021–1076 (YLSP…PRAP). The segment covering 945–954 (NNYCNTTGTM) has biased composition (polar residues). A compositionally biased stretch (low complexity) spans 1023–1037 (SPRSMNNNNGNNDNG). The segment covering 1058–1072 (TSDTSSLAQSPNSLS) has biased composition (polar residues). Positions 1078–1200 (KIMILDDNPV…CLELILRKWE (123 aa)) constitute a Response regulatory 2 domain. Residue Asp1127 is modified to 4-aspartylphosphate.

Its subcellular location is the membrane. The catalysed reaction is ATP + protein L-histidine = ADP + protein N-phospho-L-histidine.. In terms of biological role, acts in a signal transduction pathway that regulates the slug versus culmination choice. Believed to be the first component of a phosphorelay that couples the sensing of ammonia to the modulation of PKA activity and hence activates culmination and spore germination. Ammonium transporters amtA and amtC are thought to respectively activate and inhibit dhkC phosphorelay. This protein probably undergoes an ATP-dependent autophosphorylation at conserved His residue in the kinase core, and a phosphoryl group is then transferred to a conserved aspartate residue in the receiver domain. In Dictyostelium discoideum (Social amoeba), this protein is Hybrid signal transduction histidine kinase C (dhkC).